A 222-amino-acid polypeptide reads, in one-letter code: 3-dehydroquinate dehydratase (222 aa).

3-dehydroquinate is bound by residues 29-31 (ELR) and Arg55. His112 (proton donor/acceptor) is an active-site residue. Lys139 functions as the Schiff-base intermediate with substrate in the catalytic mechanism. 3 residues coordinate 3-dehydroquinate: Arg178, Ser199, and Gln203.

This sequence belongs to the type-I 3-dehydroquinase family. In terms of assembly, homodimer.

The catalysed reaction is 3-dehydroquinate = 3-dehydroshikimate + H2O. Its pathway is metabolic intermediate biosynthesis; chorismate biosynthesis; chorismate from D-erythrose 4-phosphate and phosphoenolpyruvate: step 3/7. In terms of biological role, involved in the third step of the chorismate pathway, which leads to the biosynthesis of aromatic amino acids. Catalyzes the cis-dehydration of 3-dehydroquinate (DHQ) and introduces the first double bond of the aromatic ring to yield 3-dehydroshikimate. This is 3-dehydroquinate dehydratase from Dehalococcoides mccartyi (strain ATCC BAA-2266 / KCTC 15142 / 195) (Dehalococcoides ethenogenes (strain 195)).